The following is a 104-amino-acid chain: DNA-directed RNA polymerase subunit omega (104 aa).

Belongs to the RNA polymerase subunit omega family. The RNAP catalytic core consists of 2 alpha, 1 beta, 1 beta' and 1 omega subunit. When a sigma factor is associated with the core the holoenzyme is formed, which can initiate transcription.

It carries out the reaction RNA(n) + a ribonucleoside 5'-triphosphate = RNA(n+1) + diphosphate. In terms of biological role, promotes RNA polymerase assembly. Latches the N- and C-terminal regions of the beta' subunit thereby facilitating its interaction with the beta and alpha subunits. The sequence is that of DNA-directed RNA polymerase subunit omega (rpoZ) from Streptococcus pyogenes serotype M1.